The sequence spans 295 residues: Phosphonoacetaldehyde hydrolase (295 aa).

Aspartate 36 serves as the catalytic Nucleophile. Residues aspartate 36 and alanine 38 each coordinate Mg(2+). Residue lysine 78 is the Schiff-base intermediate with substrate of the active site. Aspartate 212 provides a ligand contact to Mg(2+).

Belongs to the HAD-like hydrolase superfamily. PhnX family. In terms of assembly, homodimer. It depends on Mg(2+) as a cofactor.

It carries out the reaction phosphonoacetaldehyde + H2O = acetaldehyde + phosphate + H(+). Functionally, involved in phosphonate degradation. This is Phosphonoacetaldehyde hydrolase from Psychromonas ingrahamii (strain DSM 17664 / CCUG 51855 / 37).